A 546-amino-acid chain; its full sequence is uncharacterized protein (546 aa).

Disordered regions lie at residues 37-101, 269-300, and 392-443; these read KEND…NQKL, QNKA…QPEV, and LSDL…TSAC. Composition is skewed to basic and acidic residues over residues 81–93 and 274–283; these read DDVK…ENNQ and ADLRKTESHG. The span at 284-298 shows a compositional bias: low complexity; sequence THSQSTPPQHSSSQP.

This is an uncharacterized protein from Homo sapiens (Human).